The chain runs to 734 residues: Photosystem I P700 chlorophyll a apoprotein A2 (734 aa).

8 helical membrane-spanning segments follow: residues 46–69, 135–158, 175–199, 273–291, 330–353, 369–395, 417–439, and 517–535; these read IFAS…FHVA, LYSG…LHLQ, LNHH…HVAI, MAHH…GHMY, LHFQ…QHMY, AALY…IFFI, AIIS…LYVH, and FLVH…LILV. Positions 559 and 568 each coordinate [4Fe-4S] cluster. The next 2 membrane-spanning stretches (helical) occupy residues 575–596 and 643–665; these read AFYL…YWHW and LSVW…MFLI. 3 residues coordinate chlorophyll a: His654, Met662, and Tyr670. Residue Trp671 participates in phylloquinone binding. A helical membrane pass occupies residues 707–727; the sequence is LVGLAHFSVGYIFTYAAFLIA.

The protein belongs to the PsaA/PsaB family. The PsaA/B heterodimer binds the P700 chlorophyll special pair and subsequent electron acceptors. PSI consists of a core antenna complex that captures photons, and an electron transfer chain that converts photonic excitation into a charge separation. The eukaryotic PSI reaction center is composed of at least 11 subunits. Requires P700 is a chlorophyll a/chlorophyll a' dimer, A0 is one or more chlorophyll a, A1 is one or both phylloquinones and FX is a shared 4Fe-4S iron-sulfur center. as cofactor.

It is found in the plastid. The protein resides in the chloroplast thylakoid membrane. It catalyses the reaction reduced [plastocyanin] + hnu + oxidized [2Fe-2S]-[ferredoxin] = oxidized [plastocyanin] + reduced [2Fe-2S]-[ferredoxin]. Functionally, psaA and PsaB bind P700, the primary electron donor of photosystem I (PSI), as well as the electron acceptors A0, A1 and FX. PSI is a plastocyanin-ferredoxin oxidoreductase, converting photonic excitation into a charge separation, which transfers an electron from the donor P700 chlorophyll pair to the spectroscopically characterized acceptors A0, A1, FX, FA and FB in turn. Oxidized P700 is reduced on the lumenal side of the thylakoid membrane by plastocyanin. This Antirrhinum majus (Garden snapdragon) protein is Photosystem I P700 chlorophyll a apoprotein A2.